A 109-amino-acid chain; its full sequence is MNSVLGNQTDVAGLFLANSSEALERAVRCCTQASVVTDDGFAEGGPDERSLYIMRVVQIAVMCVLSLTVVFGIFFLGCNLLIKSEGMINFLVKDRRPSKEVEAVVVGPY.

N-linked (GlcNAc...) asparagine glycans are attached at residues Asn7 and Asn18. A helical membrane pass occupies residues 56–76; that stretch reads VVQIAVMCVLSLTVVFGIFFL. At Ser98 the chain carries Phosphoserine.

The protein belongs to the reprimo family.

It is found in the cytoplasm. The protein resides in the membrane. Its function is as follows. May be involved in the regulation of p53-dependent G2 arrest of the cell cycle. Seems to induce cell cycle arrest by inhibiting CDK1 activity and nuclear translocation of the CDC2 cyclin B1 complex. The protein is Protein reprimo (Rprm) of Rattus norvegicus (Rat).